The sequence spans 465 residues: Cysteine--tRNA ligase (465 aa).

C27 lines the Zn(2+) pocket. A 'HIGH' region motif is present at residues 29–39; it reads PTVYNFFHIGN. Zn(2+)-binding residues include C207, H232, and E236. The 'KMSKS' region motif lies at 264–268; sequence KMSKS. K267 contributes to the ATP binding site.

Belongs to the class-I aminoacyl-tRNA synthetase family. Monomer. Zn(2+) is required as a cofactor.

It localises to the cytoplasm. It catalyses the reaction tRNA(Cys) + L-cysteine + ATP = L-cysteinyl-tRNA(Cys) + AMP + diphosphate. The polypeptide is Cysteine--tRNA ligase (Clostridium botulinum (strain Loch Maree / Type A3)).